The sequence spans 384 residues: Probable protein phosphatase 2C 42 (384 aa).

The PPM-type phosphatase domain maps to 58 to 358 (DFSMAVIQAN…DDITVIVVFL (301 aa)). Positions 89, 90, 290, and 349 each coordinate Mn(2+).

This sequence belongs to the PP2C family. The cofactor is Mg(2+). Mn(2+) serves as cofactor.

The enzyme catalyses O-phospho-L-seryl-[protein] + H2O = L-seryl-[protein] + phosphate. It catalyses the reaction O-phospho-L-threonyl-[protein] + H2O = L-threonyl-[protein] + phosphate. Dephosphorylates and represses plasma membrane H(+)-ATPases (PM H(+)-ATPases, e.g. AHA1 and AHA2), thus influencing negatively plant growth and fitness. Promotes the apical hook maintenance of etiolated seedlings. The chain is Probable protein phosphatase 2C 42 from Arabidopsis thaliana (Mouse-ear cress).